Consider the following 410-residue polypeptide: Cell division protein FtsZ (410 aa).

Residues 22-26 (GGGGN), 109-111 (GTG), Glu-140, Arg-144, and Asp-188 each bind GTP. The disordered stretch occupies residues 318–410 (ESKKDRKPHR…STPPFFRRKR (93 aa)). Residues 330–344 (RQAVQPMQQTTQSVE) show a composition bias toward polar residues. Positions 360–398 (WDIRREQNTRPKVDESSLEQVDKKEFDTFHREEPNHNDD) are enriched in basic and acidic residues.

The protein belongs to the FtsZ family. Homodimer. Polymerizes to form a dynamic ring structure in a strictly GTP-dependent manner. Interacts directly with several other division proteins.

It is found in the cytoplasm. Its function is as follows. Essential cell division protein that forms a contractile ring structure (Z ring) at the future cell division site. The regulation of the ring assembly controls the timing and the location of cell division. One of the functions of the FtsZ ring is to recruit other cell division proteins to the septum to produce a new cell wall between the dividing cells. Binds GTP and shows GTPase activity. The sequence is that of Cell division protein FtsZ from Enterococcus faecalis (strain ATCC 700802 / V583).